We begin with the raw amino-acid sequence, 545 residues long: MTILTQSTTWQALAAHSHQIPHMRELFAGDPARFSNMSLSTCGLFLDYSKNRATPETLNLLQTLAQEAKLDAKIKAMFAGDIINTTEKRAVLHTALRSTAEQSIVAEGQDIVPEVQQTLNKMQQFVTSVTSGQWKGFTGKAITDIVSIGIGGSFLGPKIVSQALRPYWITGLNCHFVANVDGTSISEKLKLLDPETTLFIMSSKSFGTQETLTNTLTAKAWFLAKGGSQSDVAKHFVAVTSNVAKATDFGIDADNIFPMWDWVGGRYSLWSAIGLPIALLIGMDNFRSLLKGAHQMDTHFANAPLAENMPVIMGLFSLWYGNFFNAQSHVVLTYDHYLRGLPAYFQQLDMESNGKSVTLNGTHVDYSTGPVIWGGEGTNGQHAYHQLLHQGNALIPADFIMPLQSHNPIGEHHDQLASNCFGQTQALMQGRTLDEALAELSKSSLSDEEKLLIAKHKVMPGNKPSNTLLMDKLTPETLGALIALYEHRTFVQGAIWDINSFDQWGVELGKSLGNDVLARIGAEQDATALDASSNGLINLYRQGKI.

E351 functions as the Proton donor in the catalytic mechanism. Catalysis depends on residues H382 and K510.

The protein belongs to the GPI family.

The protein localises to the cytoplasm. The catalysed reaction is alpha-D-glucose 6-phosphate = beta-D-fructose 6-phosphate. It functions in the pathway carbohydrate biosynthesis; gluconeogenesis. It participates in carbohydrate degradation; glycolysis; D-glyceraldehyde 3-phosphate and glycerone phosphate from D-glucose: step 2/4. In terms of biological role, catalyzes the reversible isomerization of glucose-6-phosphate to fructose-6-phosphate. This is Glucose-6-phosphate isomerase from Shewanella sp. (strain MR-7).